A 68-amino-acid chain; its full sequence is Large ribosomal subunit protein uL29 (68 aa).

It belongs to the universal ribosomal protein uL29 family.

In Wigglesworthia glossinidia brevipalpis, this protein is Large ribosomal subunit protein uL29.